The primary structure comprises 142 residues: Fluoride-specific ion channel FluC 1 (142 aa).

Transmembrane regions (helical) follow at residues 23–43 (VNIALVLLGGMLGAPVRYLID), 54–74 (LPLGTLTVNIVGSAVLGGLIG), 79–99 (GWLLTAAGTGFCGALTTFSTF), and 116–136 (LGNVVISVAASVGAVYAAVSL). Residues Gly91 and Thr94 each contribute to the Na(+) site.

The protein belongs to the fluoride channel Fluc/FEX (TC 1.A.43) family.

It localises to the cell membrane. It carries out the reaction fluoride(in) = fluoride(out). With respect to regulation, na(+) is not transported, but it plays an essential structural role and its presence is essential for fluoride channel function. Fluoride-specific ion channel. Important for reducing fluoride concentration in the cell, thus reducing its toxicity. This Nocardia farcinica (strain IFM 10152) protein is Fluoride-specific ion channel FluC 1.